The following is a 364-amino-acid chain: MQERHTEQDYRALLIADTPIIDVRAPIEFEQGAMPAAINLPLMNNDERAAVGTCYKQQGSDAALALGHKLVAGEIRQQRMDAWRAACLQNPQGILCCARGGQRSHIVQSWLHAAGIDYPLVEGGYKALRQTAIQATIELAQKPIVLIGGCTGSGKTLLVQQQPNGVDLEGLARHRGSAFGRTLQPQLSQASFENLLAAEMLKTDARQNLRLWVLEDESRMIGSNHLPECLRERMTQAAIAVVEDPFEIRLERLNEEYFLRMHHDFTHAYGDEQGWQEYCEYLHHGLSAIKRRLGLQRYNELAAQLDTALTTQLTTGSTDGHLAWLVPLLKEYYDPMYRYQLEKKAEKVVFRGEWAEVAEWVKAQ.

The Rhodanese domain maps to 14 to 137; that stretch reads LIADTPIIDV…LRQTAIQATI (124 aa). Residue Cys-97 is the S-selanylcysteine intermediate of the active site.

This sequence belongs to the SelU family. In terms of assembly, monomer.

It carries out the reaction 5-methylaminomethyl-2-thiouridine(34) in tRNA + selenophosphate + (2E)-geranyl diphosphate + H2O + H(+) = 5-methylaminomethyl-2-selenouridine(34) in tRNA + (2E)-thiogeraniol + phosphate + diphosphate. The enzyme catalyses 5-methylaminomethyl-2-thiouridine(34) in tRNA + (2E)-geranyl diphosphate = 5-methylaminomethyl-S-(2E)-geranyl-thiouridine(34) in tRNA + diphosphate. It catalyses the reaction 5-methylaminomethyl-S-(2E)-geranyl-thiouridine(34) in tRNA + selenophosphate + H(+) = 5-methylaminomethyl-2-(Se-phospho)selenouridine(34) in tRNA + (2E)-thiogeraniol. The catalysed reaction is 5-methylaminomethyl-2-(Se-phospho)selenouridine(34) in tRNA + H2O = 5-methylaminomethyl-2-selenouridine(34) in tRNA + phosphate. Functionally, involved in the post-transcriptional modification of the uridine at the wobble position (U34) of tRNA(Lys), tRNA(Glu) and tRNA(Gln). Catalyzes the conversion of 2-thiouridine (S2U-RNA) to 2-selenouridine (Se2U-RNA). Acts in a two-step process involving geranylation of 2-thiouridine (S2U) to S-geranyl-2-thiouridine (geS2U) and subsequent selenation of the latter derivative to 2-selenouridine (Se2U) in the tRNA chain. This chain is tRNA 2-selenouridine synthase, found in Escherichia coli (strain ATCC 8739 / DSM 1576 / NBRC 3972 / NCIMB 8545 / WDCM 00012 / Crooks).